The sequence spans 119 residues: uncharacterized protein (119 aa).

A disordered region spans residues 78-119; sequence SHRKSQQHQTQGNQVLRGTRKLESPTVGPRPGLRRQHTRNFL. The span at 84 to 93 shows a compositional bias: polar residues; it reads QHQTQGNQVL. The segment covering 109 to 119 has biased composition (basic residues); it reads GLRRQHTRNFL.

This is an uncharacterized protein from Saccharomyces cerevisiae (strain ATCC 204508 / S288c) (Baker's yeast).